The sequence spans 35 residues: Conotoxin Cal6.1d (35 aa).

The propeptide occupies 1–8 (GLTRPSKR). Disulfide bonds link C9–C25, C16–C29, and C24–C34.

The protein belongs to the conotoxin O1 superfamily. In terms of tissue distribution, expressed by the venom duct.

The protein localises to the secreted. Its function is as follows. Probable neurotoxin with unknown target. Possibly targets ion channels. The polypeptide is Conotoxin Cal6.1d (Californiconus californicus (California cone)).